We begin with the raw amino-acid sequence, 329 residues long: Flotillin-like protein FloA (329 aa).

Transmembrane regions (helical) follow at residues 4–24 and 26–46; these read IGFI…FSFV and VGLW…TLVG.

The protein belongs to the flotillin-like FloA family. As to quaternary structure, homooligomerizes.

It localises to the cell membrane. The protein localises to the membrane raft. Found in functional membrane microdomains (FMM) that may be equivalent to eukaryotic membrane rafts. FMMs are highly dynamic and increase in number as cells age. Flotillins are thought to be important factors in membrane fluidity. This chain is Flotillin-like protein FloA, found in Staphylococcus epidermidis (strain ATCC 35984 / DSM 28319 / BCRC 17069 / CCUG 31568 / BM 3577 / RP62A).